Here is an 89-residue protein sequence, read N- to C-terminus: Large ribosomal subunit protein bL27 (89 aa).

The interval 1-22 (MAHKKAGGSSRNGRDSAGRRLG) is disordered.

This sequence belongs to the bacterial ribosomal protein bL27 family.

This Sphingopyxis alaskensis (strain DSM 13593 / LMG 18877 / RB2256) (Sphingomonas alaskensis) protein is Large ribosomal subunit protein bL27.